We begin with the raw amino-acid sequence, 370 residues long: D-alanine--D-alanine ligase (370 aa).

In terms of domain architecture, ATP-grasp spans 144-352 (KKIFADAGIP…YGALIERLVD (209 aa)). 177–232 (EEVLTYPVFVKPANLGSSVGISKATNKTELIEAMTEAFLYDRRVVVEQGVVAREIE) provides a ligand contact to ATP. The Mg(2+) site is built by Asp306, Glu319, and Asn321.

Belongs to the D-alanine--D-alanine ligase family. It depends on Mg(2+) as a cofactor. Mn(2+) is required as a cofactor.

The protein localises to the cytoplasm. The catalysed reaction is 2 D-alanine + ATP = D-alanyl-D-alanine + ADP + phosphate + H(+). It participates in cell wall biogenesis; peptidoglycan biosynthesis. In terms of biological role, cell wall formation. This Listeria innocua serovar 6a (strain ATCC BAA-680 / CLIP 11262) protein is D-alanine--D-alanine ligase.